The chain runs to 438 residues: RNA polymerase sigma factor SigA (438 aa).

The span at 1 to 11 (MKKSKSKKKAA) shows a compositional bias: basic residues. The tract at residues 1 to 69 (MKKSKSKKKA…PLDLEGPLEA (69 aa)) is disordered. Residues 12–26 (KAQEVEVKEPVKEPE) are compositionally biased toward basic and acidic residues. 2 stretches are compositionally biased toward acidic residues: residues 27 to 45 (PLPE…EPDP) and 52 to 69 (PELE…PLEA). Residues 93–128 (SDPVRQYLHEIGQVPLLTLEEEIDLARKVEEGMEAI) form a sigma-70 factor domain-1 region. The tract at residues 202-272 (LIEANLRLVV…NRAIADQART (71 aa)) is sigma-70 factor domain-2. An Interaction with polymerase core subunit RpoC motif is present at residues 226 to 229 (DLIQ). The sigma-70 factor domain-3 stretch occupies residues 281–359 (ETINKLSRTA…DENLPSPVEA (79 aa)). A sigma-70 factor domain-4 region spans residues 372-424 (ALSKLSEREAMVLKLRKGLIDGREHTLEEVGAYFGVTRERIRQIENKALRKLK). A DNA-binding region (H-T-H motif) is located at residues 398–417 (LEEVGAYFGVTRERIRQIEN).

This sequence belongs to the sigma-70 factor family. RpoD/SigA subfamily. In terms of assembly, interacts transiently with the RNA polymerase catalytic core formed by RpoA, RpoB, RpoC and RpoZ (2 alpha, 1 beta, 1 beta' and 1 omega subunit) to form the RNA polymerase holoenzyme that can initiate transcription.

It is found in the cytoplasm. Sigma factors are initiation factors that promote the attachment of RNA polymerase to specific initiation sites and are then released. This sigma factor is the primary sigma factor during exponential growth. The polypeptide is RNA polymerase sigma factor SigA (Thermus aquaticus).